We begin with the raw amino-acid sequence, 175 residues long: Sec-independent protein translocase protein TatB (175 aa).

The helical transmembrane segment at 1 to 21 threads the bilayer; it reads MLDLGLSKMALIGVVALVVLG. The tract at residues 155-175 is disordered; it reads SGAARVARHQPASLRRPTRFF.

It belongs to the TatB family. The Tat system comprises two distinct complexes: a TatABC complex, containing multiple copies of TatA, TatB and TatC subunits, and a separate TatA complex, containing only TatA subunits. Substrates initially bind to the TatABC complex, which probably triggers association of the separate TatA complex to form the active translocon.

The protein localises to the cell inner membrane. Functionally, part of the twin-arginine translocation (Tat) system that transports large folded proteins containing a characteristic twin-arginine motif in their signal peptide across membranes. Together with TatC, TatB is part of a receptor directly interacting with Tat signal peptides. TatB may form an oligomeric binding site that transiently accommodates folded Tat precursor proteins before their translocation. The sequence is that of Sec-independent protein translocase protein TatB from Burkholderia lata (strain ATCC 17760 / DSM 23089 / LMG 22485 / NCIMB 9086 / R18194 / 383).